The following is a 584-amino-acid chain: Eukaryotic translation initiation factor 2D (584 aa).

Methionine 1 is subject to N-acetylmethionine. The region spanning 93–173 is the PUA domain; that stretch reads LPTFTTWPLV…RGFSVLHTYQ (81 aa). Positions 223-257 are disordered; it reads EEENGEVHQAREDKSLSEAPEDTSTRGLNQDSTDS. The span at 227–238 shows a compositional bias: basic and acidic residues; that stretch reads GEVHQAREDKSL. A phosphoserine mark is found at serine 237, serine 254, and serine 361. The segment covering 247–257 has biased composition (polar residues); it reads TRGLNQDSTDS. Residues 383-467 enclose the SWIB/MDM2 domain; sequence PLYCVPASMT…DSLLTRCLEK (85 aa). Residues 491–564 enclose the SUI1 domain; sequence IDITLAQRAS…HLGWLLLEEY (74 aa).

This sequence belongs to the eIF2D family.

The protein localises to the cytoplasm. Functionally, translation initiation factor that is able to deliver tRNA to the P-site of the eukaryotic ribosome in a GTP-independent manner. The binding of Met-tRNA(I) occurs after the AUG codon finds its position in the P-site of 40S ribosomes, the situation that takes place during initiation complex formation on some specific RNAs. Its activity in tRNA binding with 40S subunits does not require the presence of the aminoacyl moiety. Possesses the unique ability to deliver non-Met (elongator) tRNAs into the P-site of the 40S subunit. In addition to its role in initiation, can promote release of deacylated tRNA and mRNA from recycled 40S subunits following ABCE1-mediated dissociation of post-termination ribosomal complexes into subunits. The sequence is that of Eukaryotic translation initiation factor 2D (EIF2D) from Homo sapiens (Human).